A 64-amino-acid polypeptide reads, in one-letter code: Large ribosomal subunit protein bL35 (64 aa).

This sequence belongs to the bacterial ribosomal protein bL35 family.

The sequence is that of Large ribosomal subunit protein bL35 from Colwellia psychrerythraea (strain 34H / ATCC BAA-681) (Vibrio psychroerythus).